The following is a 406-amino-acid chain: MKFVDEVSIFVKAGDGGNGMMSFRREKFIEKGGPNGGDGGDGGSVFLEADENLNTLIDYRYTRKFHAQNGEKGGSTDCTGAKGEDLILPVPVGTTVIDVATQEVIGDLVKPGQRLMVAQGGWHGLGNTRFKSSTNRAPRQTTPGKPGESRDLKLELKVLADVGLLGLPNAGKSTFIRAVSAAKPKVADYPFTTLVPNLGVVSVDRFKSFVVADIPGLIEGASEGAGLGIRFLKHLARTRLLLHLVDMAPLDESDPAEAAQVIIDELGRFSPALAERDRWLVLNKMDQIPEDEREARKADIVARLGWQGPVYVVSAISRDGTERICRDIMHYLEVRAERIAEDPVFAEELAELDQRIEDEARARLQALDDQRALRKSGVRSVDDIDEDDDFFDDEDDDGPEIIYVRD.

Residues 1–159 (MKFVDEVSIF…RDLKLELKVL (159 aa)) form the Obg domain. Positions 126 to 149 (GNTRFKSSTNRAPRQTTPGKPGES) are disordered. Over residues 129–143 (RFKSSTNRAPRQTTP) the composition is skewed to polar residues. The OBG-type G domain maps to 160 to 333 (ADVGLLGLPN…ICRDIMHYLE (174 aa)). GTP contacts are provided by residues 166 to 173 (GLPNAGKS), 191 to 195 (FTTLV), 213 to 216 (DIPG), 283 to 286 (NKMD), and 314 to 316 (SAI). Residues serine 173 and threonine 193 each coordinate Mg(2+). Residues 376–406 (SGVRSVDDIDEDDDFFDDEDDDGPEIIYVRD) are disordered. Residues 383–399 (DIDEDDDFFDDEDDDGP) are compositionally biased toward acidic residues.

It belongs to the TRAFAC class OBG-HflX-like GTPase superfamily. OBG GTPase family. In terms of assembly, monomer. It depends on Mg(2+) as a cofactor.

It is found in the cytoplasm. Functionally, an essential GTPase which binds GTP, GDP and possibly (p)ppGpp with moderate affinity, with high nucleotide exchange rates and a fairly low GTP hydrolysis rate. Plays a role in control of the cell cycle, stress response, ribosome biogenesis and in those bacteria that undergo differentiation, in morphogenesis control. The chain is GTPase Obg from Ectopseudomonas mendocina (strain ymp) (Pseudomonas mendocina).